The sequence spans 427 residues: TNF receptor-associated factor family protein DDB_G0285149 (427 aa).

An RING-type zinc finger spans residues 20-65 (CIVCTDLLSESHDKIQVNQCPHGHCLCSDCWTKQIENKKKECPICR). TRAF-type zinc fingers lie at residues 122–178 (THFK…INKD) and 178–234 (DHLE…KHQA). The region spanning 284 to 415 (KYSNQWVIEN…GNKLTIKFEI (132 aa)) is the MATH domain.

It belongs to the TNF receptor-associated factor family. A subfamily.

It is found in the cytoplasm. Probable adapter protein and signal transducer that links members of the tumor necrosis factor receptor family to different signaling pathways by association with the receptor cytoplasmic domain and kinases. In Dictyostelium discoideum (Social amoeba), this protein is TNF receptor-associated factor family protein DDB_G0285149.